The primary structure comprises 296 residues: HTH-type transcriptional regulator GltR (296 aa).

In terms of domain architecture, HTH lysR-type spans 1–58; it reads MNIQLLQVFLTTAREGSISKAALTLNYAQSNVTNKIQQLENDLQTKLFYRHSRGITLT. The segment at residues 18-37 is a DNA-binding region (H-T-H motif); it reads ISKAALTLNYAQSNVTNKIQ.

The protein belongs to the LysR transcriptional regulatory family.

Functionally, positive regulator of glutamate biosynthesis (gltAB genes). Negatively regulates its own expression. The protein is HTH-type transcriptional regulator GltR (gltR) of Bacillus subtilis (strain 168).